The chain runs to 197 residues: Dephospho-CoA kinase (197 aa).

The region spanning 2 to 197 is the DPCK domain; sequence IIGLTGGIGS…HTKYMELLNE (196 aa). 10–15 serves as a coordination point for ATP; sequence GSGKSA.

This sequence belongs to the CoaE family.

It is found in the cytoplasm. The enzyme catalyses 3'-dephospho-CoA + ATP = ADP + CoA + H(+). It functions in the pathway cofactor biosynthesis; coenzyme A biosynthesis; CoA from (R)-pantothenate: step 5/5. In terms of biological role, catalyzes the phosphorylation of the 3'-hydroxyl group of dephosphocoenzyme A to form coenzyme A. The sequence is that of Dephospho-CoA kinase from Gamma-proteobacterium EBAC31A08.